Reading from the N-terminus, the 389-residue chain is MGKMAAAVGSVATLATEPGEDAFRKLFRFYRQSRPGTADLEGVIDFSAAHAARGKGPGAQKVIKSQLNVSSVSEQNAYRAGLQPVSKWQAYGLKGYPGFIFIPNPFLPGYQWHWVKQCLKLYSQKPNVCNLDKHMSKEETQDLWEQSKEFLRYKEATKRRPRSLLEKLRWVTVGYHYNWDSKKYSADHYTPFPSDLGFLSEQVAAACGFEDFRAEAGILNYYRLDSTLGIHVDRSELDHSKPLLSFSFGQSAIFLLGGLQRDEAPTAMFMHSGDIMIMSGFSRLLNHAVPRVLPNPEGEGLPHCLEAPLPAVLPRDSMVEPCSMEDWQVCASYLKTARVNMTVRQVLATDQNFPLEPIEDEKRDISTEGFCHLDDQNSEVKRARINPDS.

The interval 86-389 (SKWQAYGLKG…VKRARINPDS (304 aa)) is tRNA-binding. Residues tryptophan 144 and 175 to 177 (YHY) each bind substrate. Residues 208–347 (GFEDFRAEAG…RVNMTVRQVL (140 aa)) form the Fe2OG dioxygenase domain. 220–222 (NYY) lines the 2-oxoglutarate pocket. Histidine 231, aspartate 233, and histidine 287 together coordinate Fe cation. Aspartate 233 provides a ligand contact to substrate. Position 338 to 344 (338 to 344 (RVNMTVR)) interacts with 2-oxoglutarate.

This sequence belongs to the alkB family. Monomer. Interacts with DNAJB6. The cofactor is Fe(2+). Ubiquitous.

The protein localises to the nucleus. It localises to the mitochondrion. It carries out the reaction 2'-deoxyribonucleotide-(2'-deoxyribose 5'-phosphate)-2'-deoxyribonucleotide-DNA = a 3'-end 2'-deoxyribonucleotide-(2,3-dehydro-2,3-deoxyribose 5'-phosphate)-DNA + a 5'-end 5'-phospho-2'-deoxyribonucleoside-DNA + H(+). It catalyses the reaction a methylated nucleobase within DNA + 2-oxoglutarate + O2 = a nucleobase within DNA + formaldehyde + succinate + CO2. The catalysed reaction is an N(6)-methyl-2'-deoxyadenosine in DNA + 2-oxoglutarate + O2 = a 2'-deoxyadenosine in DNA + formaldehyde + succinate + CO2. The enzyme catalyses an N(1)-methyladenosine in tRNA + 2-oxoglutarate + O2 = an adenosine in tRNA + formaldehyde + succinate + CO2. It carries out the reaction 5-methylcytidine(34) in mitochondrial tRNA(Met) + 2 2-oxoglutarate + 2 O2 = 5-formylcytidine(34) in mitochondrial tRNA(Met) + 2 succinate + 2 CO2 + H2O. It catalyses the reaction an N(3)-methylcytidine in mRNA + 2-oxoglutarate + O2 = a cytidine in mRNA + formaldehyde + succinate + CO2. The catalysed reaction is N(1)-methyladenosine(58) in tRNA + 2-oxoglutarate + O2 = adenosine(58) in tRNA + formaldehyde + succinate + CO2. Dioxygenase that acts on nucleic acids, such as DNA and tRNA. Requires molecular oxygen, alpha-ketoglutarate and iron. A number of activities have been described for this dioxygenase, but recent results suggest that it mainly acts on tRNAs and mediates their demethylation or oxidation depending on the context and subcellular compartment. Mainly acts as a tRNA demethylase by removing N(1)-methyladenine from various tRNAs, with a preference for N(1)-methyladenine at position 58 (m1A58) present on a stem loop structure of tRNAs. Acts as a regulator of translation initiation and elongation in response to glucose deprivation: regulates both translation initiation, by mediating demethylation of tRNA(Met), and translation elongation, N(1)-methyladenine-containing tRNAs being preferentially recruited to polysomes to promote translation elongation. In mitochondrion, specifically interacts with mt-tRNA(Met) and mediates oxidation of mt-tRNA(Met) methylated at cytosine(34) to form 5-formylcytosine (f(5)c) at this position. mt-tRNA(Met) containing the f(5)c modification at the wobble position enables recognition of the AUA codon in addition to the AUG codon, expanding codon recognition in mitochondrial translation. Specifically demethylates DNA methylated on the 6th position of adenine (N(6)-methyladenosine) DNA. N(6)-methyladenosine (m6A) DNA is present at some L1 elements in embryonic stem cells and probably promotes their silencing. Demethylates mRNAs containing N(3)-methylcytidine modification. Also able to repair alkylated single-stranded DNA by oxidative demethylation, but with low activity. Also has DNA lyase activity and introduces double-stranded breaks at abasic sites: cleaves both single-stranded DNA and double-stranded DNA at abasic sites, with the greatest activity towards double-stranded DNA with two abasic sites. DNA lyase activity does not require alpha-ketoglutarate and iron and leads to the formation of an irreversible covalent protein-DNA adduct with the 5' DNA product. DNA lyase activity is not required during base excision repair and class switch recombination of the immunoglobulin heavy chain during B lymphocyte activation. May play a role in placental trophoblast lineage differentiation. The polypeptide is Nucleic acid dioxygenase ALKBH1 (Homo sapiens (Human)).